A 67-amino-acid chain; its full sequence is Large ribosomal subunit protein uL30 (67 aa).

This sequence belongs to the universal ribosomal protein uL30 family. As to quaternary structure, part of the 50S ribosomal subunit.

The chain is Large ribosomal subunit protein uL30 from Thermotoga neapolitana (strain ATCC 49049 / DSM 4359 / NBRC 107923 / NS-E).